A 131-amino-acid chain; its full sequence is MQTPVNIPVPVLRLPRGPDGFSRGFAPDGRRAPLRPEVPEIQECPIAQESLESQEQRARAALRERYLRSLLAMVGHQVSFTLHEGVRVAAHFGATDLDVANFYVSQLQTPIGVQAEALLRCSDIISYTFKP.

Met-1 is modified (N-acetylmethionine). The SUZ-C domain maps to 1 to 29; it reads MQTPVNIPVPVLRLPRGPDGFSRGFAPDG. Phosphothreonine is present on Thr-3. Residues 65–131 enclose the Sm domain; it reads RYLRSLLAMV…SDIISYTFKP (67 aa).

This sequence belongs to the gemin-7 family. Part of the core SMN complex that contains SMN1, GEMIN2/SIP1, DDX20/GEMIN3, GEMIN4, GEMIN5, GEMIN6, GEMIN7, GEMIN8 and STRAP/UNRIP. Part of the SMN-Sm complex that contains SMN1, GEMIN2/SIP1, DDX20/GEMIN3, GEMIN4, GEMIN5, GEMIN6, GEMIN7, GEMIN8, STRAP/UNRIP and the Sm proteins SNRPB, SNRPD1, SNRPD2, SNRPD3, SNRPE, SNRPF and SNRPG. Interacts with GEMIN6; the interaction is direct. Interacts with STRAP/UNRIP; the interaction is direct. Interacts with GEMIN8; the interaction is direct. Interacts with SNRPB, SNRPD2, SNRPD3 and SNRPE; the interaction is direct.

Its subcellular location is the nucleus. It localises to the nucleoplasm. It is found in the gem. The protein localises to the cytoplasm. Its function is as follows. The SMN complex catalyzes the assembly of small nuclear ribonucleoproteins (snRNPs), the building blocks of the spliceosome, and thereby plays an important role in the splicing of cellular pre-mRNAs. Most spliceosomal snRNPs contain a common set of Sm proteins SNRPB, SNRPD1, SNRPD2, SNRPD3, SNRPE, SNRPF and SNRPG that assemble in a heptameric protein ring on the Sm site of the small nuclear RNA to form the core snRNP (Sm core). In the cytosol, the Sm proteins SNRPD1, SNRPD2, SNRPE, SNRPF and SNRPG are trapped in an inactive 6S pICln-Sm complex by the chaperone CLNS1A that controls the assembly of the core snRNP. To assemble core snRNPs, the SMN complex accepts the trapped 5Sm proteins from CLNS1A forming an intermediate. Binding of snRNA inside 5Sm triggers eviction of the SMN complex, thereby allowing binding of SNRPD3 and SNRPB to complete assembly of the core snRNP. The protein is Gem-associated protein 7 (GEMIN7) of Homo sapiens (Human).